A 685-amino-acid chain; its full sequence is Sulfate transporter 4.1, chloroplastic (685 aa).

Residues M1–S23 constitute a chloroplast transit peptide. Residues V15–L26 show a composition bias toward low complexity. The disordered stretch occupies residues V15 to S53. A run of 12 helical transmembrane segments spans residues L97–A117, L122–G142, L147–A167, I175–L195, F203–S223, W255–G275, F283–F303, T332–A352, L369–G389, L406–F426, L434–L454, and L473–I493. The region spanning Q518–C642 is the STAS domain.

The protein belongs to the SLC26A/SulP transporter (TC 2.A.53) family. Expressed both in roots and leaves.

The protein resides in the plastid. Its subcellular location is the chloroplast membrane. H(+)/sulfate cotransporter that may play a role in the regulation of sulfate assimilation. This Arabidopsis thaliana (Mouse-ear cress) protein is Sulfate transporter 4.1, chloroplastic (SULTR4;1).